We begin with the raw amino-acid sequence, 292 residues long: 2-methylisocitrate lyase (292 aa).

44 to 46 contacts substrate; that stretch reads SGA. The Mg(2+) site is built by Asp84 and Asp86. Residues 121-122, Arg156, Glu186, 208-210, Arg239, and Arg268 each bind substrate; these read CG and NMT.

It belongs to the isocitrate lyase/PEP mutase superfamily. Methylisocitrate lyase family. Homotetramer; dimer of dimers. The cofactor is Mg(2+).

The catalysed reaction is (2S,3R)-3-hydroxybutane-1,2,3-tricarboxylate = pyruvate + succinate. Its pathway is organic acid metabolism; propanoate degradation. Involved in the catabolism of short chain fatty acids (SCFA) via the 2-methylcitrate cycle I (propionate degradation route). Catalyzes the thermodynamically favored C-C bond cleavage of (2R,3S)-2-methylisocitrate to yield pyruvate and succinate via an alpha-carboxy-carbanion intermediate. The protein is 2-methylisocitrate lyase of Shewanella oneidensis (strain ATCC 700550 / JCM 31522 / CIP 106686 / LMG 19005 / NCIMB 14063 / MR-1).